We begin with the raw amino-acid sequence, 104 residues long: Cytochrome c-551 (104 aa).

Residues Met1–Ala22 form the signal peptide. Heme c contacts are provided by Cys34, Cys37, His38, and Met83.

Binds 1 heme c group covalently per subunit.

The protein localises to the periplasm. Functionally, electron donor for cytochrome cd1 in nitrite and nitrate respiration. In Pseudomonas aeruginosa (strain ATCC 15692 / DSM 22644 / CIP 104116 / JCM 14847 / LMG 12228 / 1C / PRS 101 / PAO1), this protein is Cytochrome c-551 (nirM).